The primary structure comprises 379 residues: Class V chitinase (379 aa).

An N-terminal signal peptide occupies residues 1–24 (MSSTKLISLIVSITFFLTLQCSMA). The GH18 domain maps to 27–369 (VVKASYWFPA…RAASQAWDAT (343 aa)). Residue Gly99 coordinates chitin. Glu140 acts as the Proton donor in catalysis. Residue Tyr259 participates in chitin binding. N-linked (GlcNAc...) asparagine glycans are attached at residues Asn307 and Asn327. Trp348 serves as a coordination point for chitin.

This sequence belongs to the glycosyl hydrolase 18 family. Chitinase class V subfamily.

It catalyses the reaction Random endo-hydrolysis of N-acetyl-beta-D-glucosaminide (1-&gt;4)-beta-linkages in chitin and chitodextrins.. It carries out the reaction Hydrolysis of N,N'-diacetylchitobiose from the non-reducing end of chitin and chitodextrins.. It participates in glycan degradation; chitin degradation. Its function is as follows. Can hydrolyze glycol chitin and chitin oligosaccharides (e.g. N-acetylglucosamine) (GlcNAc)4, (GlcNAc)5 and (GlcNAc)6. Hydrolyzes N-acetylglucosamine oligomers producing dimers from the non-reducing end of the substrates. In Arabidopsis thaliana (Mouse-ear cress), this protein is Class V chitinase.